We begin with the raw amino-acid sequence, 859 residues long: Leucine--tRNA ligase (859 aa).

A 'HIGH' region motif is present at residues 43-53; that stretch reads PYPSGRIHMGH. The 'KMSKS' region signature appears at 614-618; the sequence is KMSKS. Lys-617 lines the ATP pocket.

It belongs to the class-I aminoacyl-tRNA synthetase family.

The protein resides in the cytoplasm. The catalysed reaction is tRNA(Leu) + L-leucine + ATP = L-leucyl-tRNA(Leu) + AMP + diphosphate. The chain is Leucine--tRNA ligase from Magnetococcus marinus (strain ATCC BAA-1437 / JCM 17883 / MC-1).